A 244-amino-acid chain; its full sequence is Pyridoxine 5'-phosphate synthase (244 aa).

Asparagine 9 serves as a coordination point for 3-amino-2-oxopropyl phosphate. 11–12 contacts 1-deoxy-D-xylulose 5-phosphate; that stretch reads DH. Arginine 20 lines the 3-amino-2-oxopropyl phosphate pocket. The active-site Proton acceptor is histidine 45. 1-deoxy-D-xylulose 5-phosphate contacts are provided by arginine 47 and histidine 52. Glutamate 72 acts as the Proton acceptor in catalysis. Threonine 102 serves as a coordination point for 1-deoxy-D-xylulose 5-phosphate. The Proton donor role is filled by histidine 193. Residues glycine 194 and 215–216 each bind 3-amino-2-oxopropyl phosphate; that span reads GH.

It belongs to the PNP synthase family. As to quaternary structure, homooctamer; tetramer of dimers.

The protein resides in the cytoplasm. It catalyses the reaction 3-amino-2-oxopropyl phosphate + 1-deoxy-D-xylulose 5-phosphate = pyridoxine 5'-phosphate + phosphate + 2 H2O + H(+). Its pathway is cofactor biosynthesis; pyridoxine 5'-phosphate biosynthesis; pyridoxine 5'-phosphate from D-erythrose 4-phosphate: step 5/5. In terms of biological role, catalyzes the complicated ring closure reaction between the two acyclic compounds 1-deoxy-D-xylulose-5-phosphate (DXP) and 3-amino-2-oxopropyl phosphate (1-amino-acetone-3-phosphate or AAP) to form pyridoxine 5'-phosphate (PNP) and inorganic phosphate. This chain is Pyridoxine 5'-phosphate synthase, found in Blochmanniella pennsylvanica (strain BPEN).